The sequence spans 196 residues: NAD(P)H-quinone oxidoreductase subunit I (196 aa).

2 consecutive 4Fe-4S ferredoxin-type domains span residues 55-84 (GRIH…VDWE) and 95-124 (KHYS…MTEE). 8 residues coordinate [4Fe-4S] cluster: cysteine 64, cysteine 67, cysteine 70, cysteine 74, cysteine 104, cysteine 107, cysteine 110, and cysteine 114. Residues 170 to 196 (SPHDLPEGSQRSGKRPEEIIEEAEASS) form a disordered region.

It belongs to the complex I 23 kDa subunit family. NDH-1 is composed of at least 11 different subunits. [4Fe-4S] cluster serves as cofactor.

The protein localises to the cellular thylakoid membrane. The catalysed reaction is a plastoquinone + NADH + (n+1) H(+)(in) = a plastoquinol + NAD(+) + n H(+)(out). The enzyme catalyses a plastoquinone + NADPH + (n+1) H(+)(in) = a plastoquinol + NADP(+) + n H(+)(out). In terms of biological role, NDH-1 shuttles electrons from an unknown electron donor, via FMN and iron-sulfur (Fe-S) centers, to quinones in the respiratory and/or the photosynthetic chain. The immediate electron acceptor for the enzyme in this species is believed to be plastoquinone. Couples the redox reaction to proton translocation, and thus conserves the redox energy in a proton gradient. The polypeptide is NAD(P)H-quinone oxidoreductase subunit I (Crocosphaera subtropica (strain ATCC 51142 / BH68) (Cyanothece sp. (strain ATCC 51142))).